The primary structure comprises 513 residues: ATP synthase subunit alpha (513 aa).

Position 171–178 (171–178) interacts with ATP; that stretch reads GDRQIGKT.

Belongs to the ATPase alpha/beta chains family. As to quaternary structure, F-type ATPases have 2 components, CF(1) - the catalytic core - and CF(0) - the membrane proton channel. CF(1) has five subunits: alpha(3), beta(3), gamma(1), delta(1), epsilon(1). CF(0) has three main subunits: a(1), b(2) and c(9-12). The alpha and beta chains form an alternating ring which encloses part of the gamma chain. CF(1) is attached to CF(0) by a central stalk formed by the gamma and epsilon chains, while a peripheral stalk is formed by the delta and b chains.

Its subcellular location is the cell membrane. The enzyme catalyses ATP + H2O + 4 H(+)(in) = ADP + phosphate + 5 H(+)(out). Functionally, produces ATP from ADP in the presence of a proton gradient across the membrane. The alpha chain is a regulatory subunit. The protein is ATP synthase subunit alpha of Wolbachia pipientis wMel.